The chain runs to 167 residues: uncharacterized protein (167 aa).

The signal sequence occupies residues 1–23; it reads MKRLHKRFLLATFCALFTATLQA. Cysteine 39 and cysteine 77 are joined by a disulfide.

The protein belongs to the fimbrial protein family.

The protein resides in the fimbrium. This is an uncharacterized protein from Escherichia coli (strain K12).